Reading from the N-terminus, the 372-residue chain is tRNA-specific 2-thiouridylase MnmA (372 aa).

Residues 7-14 and methionine 33 each bind ATP; that span reads GLSGGVDS. The interval 104-106 is interaction with target base in tRNA; that stretch reads NPD. Catalysis depends on cysteine 109, which acts as the Nucleophile. A disulfide bridge connects residues cysteine 109 and cysteine 202. Glycine 134 contributes to the ATP binding site. The interaction with tRNA stretch occupies residues 152-154; sequence KDQ. Catalysis depends on cysteine 202, which acts as the Cysteine persulfide intermediate. Positions 310 to 311 are interaction with tRNA; it reads RY.

Belongs to the MnmA/TRMU family.

Its subcellular location is the cytoplasm. It carries out the reaction S-sulfanyl-L-cysteinyl-[protein] + uridine(34) in tRNA + AH2 + ATP = 2-thiouridine(34) in tRNA + L-cysteinyl-[protein] + A + AMP + diphosphate + H(+). In terms of biological role, catalyzes the 2-thiolation of uridine at the wobble position (U34) of tRNA, leading to the formation of s(2)U34. This chain is tRNA-specific 2-thiouridylase MnmA, found in Mesomycoplasma hyopneumoniae (strain 232) (Mycoplasma hyopneumoniae).